The chain runs to 244 residues: 3-deoxy-manno-octulosonate cytidylyltransferase (244 aa).

The protein belongs to the KdsB family.

It localises to the cytoplasm. The enzyme catalyses 3-deoxy-alpha-D-manno-oct-2-ulosonate + CTP = CMP-3-deoxy-beta-D-manno-octulosonate + diphosphate. It participates in nucleotide-sugar biosynthesis; CMP-3-deoxy-D-manno-octulosonate biosynthesis; CMP-3-deoxy-D-manno-octulosonate from 3-deoxy-D-manno-octulosonate and CTP: step 1/1. Its pathway is bacterial outer membrane biogenesis; lipopolysaccharide biosynthesis. In terms of biological role, activates KDO (a required 8-carbon sugar) for incorporation into bacterial lipopolysaccharide in Gram-negative bacteria. In Rickettsia bellii (strain OSU 85-389), this protein is 3-deoxy-manno-octulosonate cytidylyltransferase.